The following is a 365-amino-acid chain: Peptide chain release factor 2 (365 aa).

Glutamine 251 carries the post-translational modification N5-methylglutamine.

Belongs to the prokaryotic/mitochondrial release factor family. Post-translationally, methylated by PrmC. Methylation increases the termination efficiency of RF2.

It is found in the cytoplasm. Its function is as follows. Peptide chain release factor 2 directs the termination of translation in response to the peptide chain termination codons UGA and UAA. The polypeptide is Peptide chain release factor 2 (Aliarcobacter butzleri (strain RM4018) (Arcobacter butzleri)).